The sequence spans 60 residues: Large ribosomal subunit protein uL30 (60 aa).

This sequence belongs to the universal ribosomal protein uL30 family. As to quaternary structure, part of the 50S ribosomal subunit.

In Levilactobacillus brevis (strain ATCC 367 / BCRC 12310 / CIP 105137 / JCM 1170 / LMG 11437 / NCIMB 947 / NCTC 947) (Lactobacillus brevis), this protein is Large ribosomal subunit protein uL30.